Here is a 722-residue protein sequence, read N- to C-terminus: D-galactosyl-beta-1-&gt;4-L-rhamnose phosphorylase (722 aa).

Aspartate 319 acts as the Proton donor in catalysis.

This sequence belongs to the glycoside hydrolase 112 family.

It carries out the reaction beta-D-galactosyl-(1-&gt;4)-L-rhamnose + phosphate = alpha-D-galactose 1-phosphate + L-rhamnopyranose. Reversibly phosphorolyzes beta-D-galactosyl-(1-&gt;4)-L-rhamnose to form alpha-D-galactose 1-phosphate and L-rhamnose. Does not phosphorolyze galacto-N-biose or lacto-N-biose. In the reverse reaction, has the highest activity toward L-rhamnose, also has activity toward L-mannose, and low activity toward L-lyxose, D-glucose, 2-deoxy-D-glucose and D-galactose. In Lachnoclostridium phytofermentans (strain ATCC 700394 / DSM 18823 / ISDg) (Clostridium phytofermentans), this protein is D-galactosyl-beta-1-&gt;4-L-rhamnose phosphorylase.